Reading from the N-terminus, the 948-residue chain is Translation initiation factor IF-2 (948 aa).

3 disordered regions span residues 61–120 (IQAN…PALI), 162–243 (KSRE…TQSA), and 255–285 (QEKDKQEAKKAKKPSKPKATPTAKNNKSHKI). Residues 68–78 (KNPEQDNKDDL) show a composition bias toward basic and acidic residues. A compositionally biased stretch (low complexity) spans 173 to 189 (SNTNNANSTNNANNVNN). Over residues 190–207 (AKKEISEVKKQEQEIKRH) the composition is skewed to basic and acidic residues. Residues 208–219 (ENIKRRTGFRVI) are compositionally biased toward basic residues. Over residues 230-243 (ENSVAESKKPTQSA) the composition is skewed to polar residues. One can recognise a tr-type G domain in the interval 447–616 (ERPPVVTIMG…LIQADIMELK (170 aa)). The G1 stretch occupies residues 456-463 (GHVDHGKT). 456-463 (GHVDHGKT) serves as a coordination point for GTP. A G2 region spans residues 481–485 (GITQH). The segment at 502–505 (DTPG) is G3. GTP is bound by residues 502–506 (DTPGH) and 556–559 (NKMD). The segment at 556 to 559 (NKMD) is G4. Positions 592 to 594 (SAK) are G5.

The protein belongs to the TRAFAC class translation factor GTPase superfamily. Classic translation factor GTPase family. IF-2 subfamily.

It localises to the cytoplasm. Functionally, one of the essential components for the initiation of protein synthesis. Protects formylmethionyl-tRNA from spontaneous hydrolysis and promotes its binding to the 30S ribosomal subunits. Also involved in the hydrolysis of GTP during the formation of the 70S ribosomal complex. The sequence is that of Translation initiation factor IF-2 from Helicobacter pylori (strain Shi470).